The primary structure comprises 616 residues: Dihydroxy-acid dehydratase (616 aa).

A Mg(2+)-binding site is contributed by aspartate 81. [2Fe-2S] cluster is bound at residue cysteine 122. The Mg(2+) site is built by aspartate 123 and lysine 124. Lysine 124 carries the N6-carboxylysine modification. Cysteine 195 is a [2Fe-2S] cluster binding site. Glutamate 491 lines the Mg(2+) pocket. Serine 517 acts as the Proton acceptor in catalysis.

Belongs to the IlvD/Edd family. As to quaternary structure, homodimer. [2Fe-2S] cluster serves as cofactor. Requires Mg(2+) as cofactor.

It catalyses the reaction (2R)-2,3-dihydroxy-3-methylbutanoate = 3-methyl-2-oxobutanoate + H2O. The catalysed reaction is (2R,3R)-2,3-dihydroxy-3-methylpentanoate = (S)-3-methyl-2-oxopentanoate + H2O. Its pathway is amino-acid biosynthesis; L-isoleucine biosynthesis; L-isoleucine from 2-oxobutanoate: step 3/4. It functions in the pathway amino-acid biosynthesis; L-valine biosynthesis; L-valine from pyruvate: step 3/4. In terms of biological role, functions in the biosynthesis of branched-chain amino acids. Catalyzes the dehydration of (2R,3R)-2,3-dihydroxy-3-methylpentanoate (2,3-dihydroxy-3-methylvalerate) into 2-oxo-3-methylpentanoate (2-oxo-3-methylvalerate) and of (2R)-2,3-dihydroxy-3-methylbutanoate (2,3-dihydroxyisovalerate) into 2-oxo-3-methylbutanoate (2-oxoisovalerate), the penultimate precursor to L-isoleucine and L-valine, respectively. The sequence is that of Dihydroxy-acid dehydratase from Salmonella paratyphi A (strain ATCC 9150 / SARB42).